We begin with the raw amino-acid sequence, 376 residues long: Actin-like protein 53D (376 aa).

The tract at residues 1–40 (MSSEVDSNSHHAAVVIDNGSGVCKAGFSPEDTPRAVFPSI) is necessary and sufficient for recruitment to the fusome and actin cones of spermatocyte cysts.

It belongs to the actin family. ARP1 subfamily. As to expression, high expression in males whereas expression in females is very low. In adult males, highest levels of expression are in the testis. In adult females, expressed only in the ovaries at very low levels. In larvae, highly expressed in the imaginal disk whereas in prepupae and pupae modest levels of expression occur in the fat body.

It localises to the cytoplasm. The protein resides in the cytoskeleton. In terms of biological role, required for optimal embryo development, particularly under heat stress conditions. Also appears to have a role in negatively regulating spermatocyte cyst development. Under heat stress conditions, required for the correct organization and migration of nuclei during early embryogenesis, and therefore possibly functions by regulating embryonic actin networks during the heat stress response. This Drosophila melanogaster (Fruit fly) protein is Actin-like protein 53D.